Reading from the N-terminus, the 530-residue chain is GMP synthase [glutamine-hydrolyzing] (530 aa).

The Glutamine amidotransferase type-1 domain maps to 4-205; the sequence is RILILDYGSQ…VREICGCEGD (202 aa). The active-site Nucleophile is the Cys-84. Residues His-179 and Glu-181 contribute to the active site. Residues 206-398 enclose the GMPS ATP-PPase domain; it reads WNMPDYISEA…LGLPPQMVYR (193 aa). Position 233 to 239 (233 to 239) interacts with ATP; it reads SGGVDSS.

Homodimer.

The enzyme catalyses XMP + L-glutamine + ATP + H2O = GMP + L-glutamate + AMP + diphosphate + 2 H(+). It participates in purine metabolism; GMP biosynthesis; GMP from XMP (L-Gln route): step 1/1. Catalyzes the synthesis of GMP from XMP. This Bordetella avium (strain 197N) protein is GMP synthase [glutamine-hydrolyzing].